The following is a 775-amino-acid chain: Lon protease (775 aa).

Residues 6-207 (LPLMALRDIV…TIINILTSNI (202 aa)) form the Lon N-terminal domain. Residue 356–363 (GPPGVGKT) coordinates ATP. The 182-residue stretch at 592–773 (NDQIGSTTGL…DQVLEHALTK (182 aa)) folds into the Lon proteolytic domain. Residues S679 and K722 contribute to the active site.

The protein belongs to the peptidase S16 family. As to quaternary structure, homohexamer. Organized in a ring with a central cavity.

It is found in the cytoplasm. It carries out the reaction Hydrolysis of proteins in presence of ATP.. Functionally, ATP-dependent serine protease that mediates the selective degradation of mutant and abnormal proteins as well as certain short-lived regulatory proteins. Required for cellular homeostasis and for survival from DNA damage and developmental changes induced by stress. Degrades polypeptides processively to yield small peptide fragments that are 5 to 10 amino acids long. Binds to DNA in a double-stranded, site-specific manner. The sequence is that of Lon protease from Rickettsia bellii (strain RML369-C).